A 152-amino-acid chain; its full sequence is Ribosomal RNA large subunit methyltransferase H (152 aa).

S-adenosyl-L-methionine-binding positions include leucine 70, glycine 102, and 120–125 (LSPMTF).

This sequence belongs to the RNA methyltransferase RlmH family. As to quaternary structure, homodimer.

The protein localises to the cytoplasm. The enzyme catalyses pseudouridine(1915) in 23S rRNA + S-adenosyl-L-methionine = N(3)-methylpseudouridine(1915) in 23S rRNA + S-adenosyl-L-homocysteine + H(+). Its function is as follows. Specifically methylates the pseudouridine at position 1915 (m3Psi1915) in 23S rRNA. The polypeptide is Ribosomal RNA large subunit methyltransferase H (Pelobacter propionicus (strain DSM 2379 / NBRC 103807 / OttBd1)).